Consider the following 328-residue polypeptide: MMENVFDYEDIQLIPAKCIVNSRSECDTTVTLGKHKFKLPVVPANMQTIIDERIATYLAENNYFYIMHRFQPEKRISFIRDMQSRGLIASISVGVKEDEYEFVQQLAAEQLTPEYITIDIAHGHSNAVINMIQHIKKHLPESFVIAGNVGTPEAVRELENAGADATKVGIGPGKVCITKIKTGFGTGGWQLAALRWCAKAASKPIIADGGIRTHGDVAKSIRFGATMVMIGSLFAGHEESPGETIERDGKLYKEYFGSASEFQKGEKKNVEGKKMFVEHKGSLEDTLIEMEQDLQSSISYAGGTKLDAIRTVDYVVVKNSIFNGDKVY.

The active-site Thioimidate intermediate is the cysteine 176. 205 to 228 is an NADP(+) binding site; it reads IIADGGIRTHGDVAKSIRFGATMV.

It belongs to the IMPDH/GMPR family. GuaC type 2 subfamily.

It carries out the reaction IMP + NH4(+) + NADP(+) = GMP + NADPH + 2 H(+). Catalyzes the irreversible NADPH-dependent deamination of GMP to IMP. It functions in the conversion of nucleobase, nucleoside and nucleotide derivatives of G to A nucleotides, and in maintaining the intracellular balance of A and G nucleotides. The sequence is that of GMP reductase from Bacillus cereus (strain ATCC 14579 / DSM 31 / CCUG 7414 / JCM 2152 / NBRC 15305 / NCIMB 9373 / NCTC 2599 / NRRL B-3711).